A 40-amino-acid polypeptide reads, in one-letter code: uncharacterized protein (40 aa).

This is an uncharacterized protein from Treponema pallidum (strain Nichols).